Here is a 179-residue protein sequence, read N- to C-terminus: Large ribosomal subunit protein uL5 (179 aa).

Belongs to the universal ribosomal protein uL5 family. Part of the 50S ribosomal subunit; part of the 5S rRNA/L5/L18/L25 subcomplex. Contacts the 5S rRNA and the P site tRNA. Forms a bridge to the 30S subunit in the 70S ribosome.

In terms of biological role, this is one of the proteins that bind and probably mediate the attachment of the 5S RNA into the large ribosomal subunit, where it forms part of the central protuberance. In the 70S ribosome it contacts protein S13 of the 30S subunit (bridge B1b), connecting the 2 subunits; this bridge is implicated in subunit movement. Contacts the P site tRNA; the 5S rRNA and some of its associated proteins might help stabilize positioning of ribosome-bound tRNAs. The protein is Large ribosomal subunit protein uL5 of Rickettsia felis (strain ATCC VR-1525 / URRWXCal2) (Rickettsia azadi).